We begin with the raw amino-acid sequence, 239 residues long: Ras-like protein B (239 aa).

GTP-binding positions include 13-18 (GVGKTA), 29-35 (VETYDPT), 59-60 (AG), 139-142 (NKSD), and 169-171 (SAK). Positions 32–40 (YDPTIEDSY) match the Effector region motif. The tract at residues 191 to 227 (RQQQQGGRAQDRRPTGLGPMRDRDAGPEYPKTFRPDR) is disordered. Basic and acidic residues predominate over residues 199 to 226 (AQDRRPTGLGPMRDRDAGPEYPKTFRPD).

The protein belongs to the small GTPase superfamily. Ras family. Interacts with mpkA.

It carries out the reaction GTP + H2O = GDP + phosphate + H(+). Its function is as follows. Ras-like protein involved in the activation of Ras protein signal transduction. Ras proteins bind GDP/GTP and possess intrinsic GTPase activity. Plays a role in hyphal morphology and conidiophore development. Required for full virulence. In Aspergillus fumigatus (strain ATCC MYA-4609 / CBS 101355 / FGSC A1100 / Af293) (Neosartorya fumigata), this protein is Ras-like protein B.